A 339-amino-acid polypeptide reads, in one-letter code: UDP-3-O-acylglucosamine N-acyltransferase (339 aa).

The Proton acceptor role is filled by His-238.

Belongs to the transferase hexapeptide repeat family. LpxD subfamily. As to quaternary structure, homotrimer.

The catalysed reaction is a UDP-3-O-[(3R)-3-hydroxyacyl]-alpha-D-glucosamine + a (3R)-hydroxyacyl-[ACP] = a UDP-2-N,3-O-bis[(3R)-3-hydroxyacyl]-alpha-D-glucosamine + holo-[ACP] + H(+). It functions in the pathway bacterial outer membrane biogenesis; LPS lipid A biosynthesis. In terms of biological role, catalyzes the N-acylation of UDP-3-O-acylglucosamine using 3-hydroxyacyl-ACP as the acyl donor. Is involved in the biosynthesis of lipid A, a phosphorylated glycolipid that anchors the lipopolysaccharide to the outer membrane of the cell. The chain is UDP-3-O-acylglucosamine N-acyltransferase from Aeromonas hydrophila subsp. hydrophila (strain ATCC 7966 / DSM 30187 / BCRC 13018 / CCUG 14551 / JCM 1027 / KCTC 2358 / NCIMB 9240 / NCTC 8049).